The chain runs to 501 residues: Probable cytochrome P450 6a20 (501 aa).

Cys445 lines the heme pocket.

The protein belongs to the cytochrome P450 family. It depends on heme as a cofactor.

It is found in the endoplasmic reticulum membrane. Its subcellular location is the microsome membrane. May be involved in the metabolism of insect hormones and in the breakdown of synthetic insecticides. This is Probable cytochrome P450 6a20 (Cyp6a20) from Drosophila melanogaster (Fruit fly).